Here is a 396-residue protein sequence, read N- to C-terminus: Penicillopepsin-1 (396 aa).

An N-terminal signal peptide occupies residues 1–20 (MVVFSKVTASLACFSAVVSA). Residues 21–72 (AAVPVKSPRQGFSVNQVQKTVTGTRTVNLPGVYANALAKYGATVPANVHAAA) constitute a propeptide, activation peptide. The region spanning 88 to 393 (YLTPVKIGES…DAEGPRLGFA (306 aa)) is the Peptidase A1 domain. Active-site residues include Asp-104 and Asp-285. N-linked (GlcNAc...) asparagine glycosylation is present at Asn-311. Residues Cys-321 and Cys-356 are joined by a disulfide bond.

This sequence belongs to the peptidase A1 family. In terms of assembly, monomer.

Its subcellular location is the secreted. It carries out the reaction Hydrolysis of proteins with broad specificity similar to that of pepsin A, preferring hydrophobic residues at P1 and P1', but also cleaving 20-Gly-|-Glu-21 in the B chain of insulin. Clots milk, and activates trypsinogen.. Secreted aspartic endopeptidase that allows assimilation of proteinaceous substrates. The scissile peptide bond is attacked by a nucleophilic water molecule activated by two aspartic residues in the active site. Shows a broad primary substrate specificity. Favors hydrophobic residues at the P1 and P1' positions, but can also activate trypsinogen and hydrolyze the B chain of insulin between positions 'Gly-20' and 'Glu-21'. In Penicillium rubens (strain ATCC 28089 / DSM 1075 / NRRL 1951 / Wisconsin 54-1255) (Penicillium chrysogenum), this protein is Penicillopepsin-1 (pepA).